The following is a 213-amino-acid chain: MKILLLILIAYLLGSIQTGLWIGKVFFHTNLREHGSGNTGTTNTFRVLGKTAGTITFLVDMLKGTLAVLLPIWLGVTEVSPLIIGFFAIIGHVFPFFTGFKGGKAVATSAGVLLGFVPLYFVFLLLVFALTLYLTSMISFSSITAAVVGLITLATFPAIHFLLDGYDPIFSAVLIIIALVIIFRHTENIARIRNHRENLVPFGLNLTKQNPNK.

Helical transmembrane passes span 3–23 (ILLL…LWIG), 55–75 (ITFL…IWLG), 80–100 (SPLI…FTGF), 110–130 (AGVL…VFAL), 142–162 (SITA…IHFL), and 163–183 (LDGY…VIIF).

The protein belongs to the PlsY family. In terms of assembly, probably interacts with PlsX.

It localises to the cell membrane. It catalyses the reaction an acyl phosphate + sn-glycerol 3-phosphate = a 1-acyl-sn-glycero-3-phosphate + phosphate. The protein operates within lipid metabolism; phospholipid metabolism. Functionally, catalyzes the transfer of an acyl group from acyl-phosphate (acyl-PO(4)) to glycerol-3-phosphate (G3P) to form lysophosphatidic acid (LPA). This enzyme utilizes acyl-phosphate as fatty acyl donor, but not acyl-CoA or acyl-ACP. The chain is Glycerol-3-phosphate acyltransferase from Streptococcus thermophilus (strain CNRZ 1066).